The primary structure comprises 297 residues: Probable endonuclease 4 (297 aa).

9 residues coordinate Zn(2+): His68, His109, Glu144, Asp178, His181, His213, Asp226, His228, and Glu258.

It belongs to the AP endonuclease 2 family. It depends on Zn(2+) as a cofactor.

The enzyme catalyses Endonucleolytic cleavage to 5'-phosphooligonucleotide end-products.. Its function is as follows. Endonuclease IV plays a role in DNA repair. It cleaves phosphodiester bonds at apurinic or apyrimidinic (AP) sites, generating a 3'-hydroxyl group and a 5'-terminal sugar phosphate. In Lysinibacillus sphaericus (strain C3-41), this protein is Probable endonuclease 4.